The chain runs to 788 residues: DNA replication helicase (788 aa).

73 to 80 (GTAGAGKS) contributes to the ATP binding site.

The protein belongs to the herpesviridae helicase family. In terms of assembly, associates with the primase and the primase-associated factor to form the helicase-primase complex.

The protein resides in the host nucleus. In terms of biological role, component of the helicase/primase complex. Unwinds the DNA at the replication forks and generates single-stranded DNA for both leading and lagging strand synthesis. The primase synthesizes short RNA primers on the lagging strand that the polymerase elongates using dNTPs. Possesses helicase-like motifs and therefore may act as the helicase subunit of the complex. The sequence is that of DNA replication helicase from Homo sapiens (Human).